A 666-amino-acid chain; its full sequence is LEAF RUST 10 DISEASE-RESISTANCE LOCUS RECEPTOR-LIKE PROTEIN KINASE-like 2.5 (666 aa).

The first 30 residues, 1–30 (MINFSLSLTKSMSYSFIWMLFVIHISCVLS), serve as a signal peptide directing secretion. At 31–275 (ADGNHILCSP…PTRNKVILKL (245 aa)) the chain is on the extracellular side. N-linked (GlcNAc...) asparagine glycosylation is found at Asn119, Asn141, Asn171, and Asn198. The helical transmembrane segment at 276 to 296 (FFIVIYVLGIGAASFAMMGVI) threads the bilayer. The Cytoplasmic portion of the chain corresponds to 297-666 (LVVTCLNCLI…YTEICSINVA (370 aa)). The region spanning 348–636 (KSFAEVIGKG…ALEVPPRPVL (289 aa)) is the Protein kinase domain. ATP-binding positions include 354–362 (IGKGGFGTV) and Lys376. Residue Tyr420 is modified to Phosphotyrosine. The Proton acceptor role is filled by Asp471. Phosphothreonine is present on residues Thr508 and Thr511.

It belongs to the protein kinase superfamily. Ser/Thr protein kinase family.

It is found in the membrane. The enzyme catalyses L-seryl-[protein] + ATP = O-phospho-L-seryl-[protein] + ADP + H(+). The catalysed reaction is L-threonyl-[protein] + ATP = O-phospho-L-threonyl-[protein] + ADP + H(+). This is LEAF RUST 10 DISEASE-RESISTANCE LOCUS RECEPTOR-LIKE PROTEIN KINASE-like 2.5 from Arabidopsis thaliana (Mouse-ear cress).